Reading from the N-terminus, the 549-residue chain is Peptide transport periplasmic protein SapA (549 aa).

An N-terminal signal peptide occupies residues 1-21 (MRLVLSSLIVIAGLLSSQATA).

The protein belongs to the bacterial solute-binding protein 5 family.

Its subcellular location is the periplasm. In terms of biological role, involved in a peptide intake transport system that plays a role in the resistance to antimicrobial peptides. The sequence is that of Peptide transport periplasmic protein SapA from Salmonella typhimurium (strain LT2 / SGSC1412 / ATCC 700720).